The chain runs to 202 residues: Small ribosomal subunit protein uS5 (202 aa).

In terms of domain architecture, S5 DRBM spans 42–105 (LKDEVLKIMP…ILAKLSIVPV (64 aa)). The residue at position 192 (Thr192) is a Phosphothreonine.

It belongs to the universal ribosomal protein uS5 family. Component of the small ribosomal subunit. Interacts with zinc finger protein ZNF277 (via zinc-finger domains); the interaction is direct; the interaction is extra-ribosomal. Interaction with ZNF277 competes with the binding of RPS2 to protein arginine methyltransferase PRMT3. Post-translationally, citrullinated by PADI4 in the Arg/Gly-rich region. Asymmetric arginine dimethylation by PRMT3 occurs at multiple sites in the Arg/Gly-rich region. In terms of processing, monoubiquitinated by RNF10 when a ribosome has stalled during translation, leading to its degradation by the proteasome. Deubiquitinated by USP10, preventing degradation by the proteasome and promoting 40S ribosome subunit recycling following ribosome dissociation.

It localises to the cytoplasm. The protein localises to the nucleus. The protein resides in the nucleolus. Its function is as follows. Component of the ribosome, a large ribonucleoprotein complex responsible for the synthesis of proteins in the cell. The small ribosomal subunit (SSU) binds messenger RNAs (mRNAs) and translates the encoded message by selecting cognate aminoacyl-transfer RNA (tRNA) molecules. The large subunit (LSU) contains the ribosomal catalytic site termed the peptidyl transferase center (PTC), which catalyzes the formation of peptide bonds, thereby polymerizing the amino acids delivered by tRNAs into a polypeptide chain. The nascent polypeptides leave the ribosome through a tunnel in the LSU and interact with protein factors that function in enzymatic processing, targeting, and the membrane insertion of nascent chains at the exit of the ribosomal tunnel. Plays a role in the assembly and function of the 40S ribosomal subunit. Mutations in this protein affects the control of translational fidelity. Involved in nucleolar processing of pre-18S ribosomal RNA and ribosome assembly. The protein is Small ribosomal subunit protein uS5 (RPS2) of Cricetulus griseus (Chinese hamster).